The following is a 1102-amino-acid chain: Putative ISWI chromatin-remodeling complex subunit YPL216W (1102 aa).

The WAC domain maps to 23-131 (ETPWVIKESS…DTVCLKTIQK (109 aa)). The segment at 271–301 (ELYTPLTIPPESDVEPADWKETSETSETSET) is disordered. A DDT domain is found at 375 to 435 (QFPTERLLVV…FLKTYNSKGS (61 aa)). Positions 673–743 (CNGIRLKLDS…EDIAFLEAKL (71 aa)) form a coiled coil.

It localises to the nucleus. In terms of biological role, may be required for the activity of an ISWI chromatin-remodeling complex. This is Putative ISWI chromatin-remodeling complex subunit YPL216W from Saccharomyces cerevisiae (strain ATCC 204508 / S288c) (Baker's yeast).